The primary structure comprises 84 residues: MPLAKDPLHPSPEEEKRKHKKKRLVQSPNSYFMDVKCPGCYKITTVFSHAQTVVLCVGCSTVLCQPTGGKARLTEGCSFRRKQH.

Positions 1 to 16 (MPLAKDPLHPSPEEEK) are enriched in basic and acidic residues. The segment at 1 to 25 (MPLAKDPLHPSPEEEKRKHKKKRLV) is disordered. S11 is subject to Phosphoserine. The segment at 38–60 (PGCYKITTVFSHAQTVVLCVGCS) adopts a C4-type zinc-finger fold.

This sequence belongs to the eukaryotic ribosomal protein eS27 family. Component of the small ribosomal subunit. Part of the small subunit (SSU) processome, composed of more than 70 proteins and the RNA chaperone small nucleolar RNA (snoRNA) U3. It depends on Zn(2+) as a cofactor.

Its subcellular location is the cytoplasm. It localises to the nucleus. The protein resides in the nucleolus. In terms of biological role, component of the small ribosomal subunit. The ribosome is a large ribonucleoprotein complex responsible for the synthesis of proteins in the cell. Required for proper rRNA processing and maturation of 18S rRNAs. Part of the small subunit (SSU) processome, first precursor of the small eukaryotic ribosomal subunit. During the assembly of the SSU processome in the nucleolus, many ribosome biogenesis factors, an RNA chaperone and ribosomal proteins associate with the nascent pre-rRNA and work in concert to generate RNA folding, modifications, rearrangements and cleavage as well as targeted degradation of pre-ribosomal RNA by the RNA exosome. The protein is Small ribosomal subunit protein eS27 (RPS27) of Pongo abelii (Sumatran orangutan).